We begin with the raw amino-acid sequence, 1006 residues long: MVATDSSDQVAKFDVSHKIIEDIVYSLSNRIFSYAEHVPLNRYLTQWNNSGRRNGFSNNVELFNLEARSGASAFLLGSYTAAISSPGVYSMMTPSSCLSLLNPLLSNIIPFYGASKPLVVHVAALAYLEQTYCADNVSVLDFSYANNFTVFASQSNVEAAHLALASTLAAKAAPVIHVYEPDAIVTTTDPSLPLLDSNAVVECFNSYQSEADPVSNASKALKHVNDYFNTSYAPAEYYGSQTASKVIVTFGKSETVAARALLAANPDVGVLSIRIFPFVAENIFNVLPTTCKSLVVLSQVRSTAVGTSSIYYSFLLATLLSTKPSALAISEHRYSLVESVTLSSLFDALHETLQLKAATPKAVHVDKSINVWESDVGDSLVLSLVSAYRTDKSRSVAFRPLFDNLTLAGVRFTVAQVSTANAVLTDVVKDVDADITILTTDRLPLHYRVLAKAAEHSICLLQSSIAPDEATKKLPYEFIADALEKGVKLVLIDPKKFAIDASNLPLLVSFIQLVKPGLGVDEALAVLAKQNNLTDTNLKDAVDSLKQSLSFINLDASALKDREPSEKELPSTAKETSFAPNAVKTLDEDITPQSSNWQTVAKQIIFPEAYKKKDALRPDVSEKVFTVHVRANKRLTPAEYNRNIFHIEFDLGDSGLTYDIGEALGVYGVNNKTHVHDFIEEYGLDANELIHVPSIQHPGHWETRTVFQALCQNIDIFGKPTKKFHEQLLEFETDEKERADLQILISPAGAPDFKRRAEVDMLTYADVLKEFKHAKLTAAQIAQIVPVIKRREYSISSSQKKHNDSVHLLVVVVGWKDGMGRDRYGQCSHYLSNLKVGEPLCVAVKTSVMKLPTSPLKPIVMAGLGTGLAPFRAFLQFKEWQRMQGIESGDILLYLGSRTQREEYLYGEDWEAYHSANLLTHIGQAFSRDQPYKIYIQDVMRSTKDMLKKALMDEGGSFYLCGPTWPLPEITSVLEEVIQSSYDEPVDARKIIEQWKEERRFVIEVY.

An FAD-binding FR-type domain is found at 622-852; it reads EKVFTVHVRA…AVKTSVMKLP (231 aa). FAD-binding positions include 658 to 669 and 788 to 798; these read YDIGEALGVYGV and IKRREYSISSS.

FAD is required as a cofactor. It depends on FMN as a cofactor.

It carries out the reaction hydrogen sulfide + 3 NADP(+) + 3 H2O = sulfite + 3 NADPH + 4 H(+). It participates in sulfur metabolism; hydrogen sulfide biosynthesis; hydrogen sulfide from sulfite (NADPH route): step 1/1. Functionally, this enzyme catalyzes the 6-electron reduction of sulfite to sulfide. This is one of several activities required for the biosynthesis of L-cysteine from sulfate. The sequence is that of Probable sulfite reductase [NADPH] flavoprotein component from Schizosaccharomyces pombe (strain 972 / ATCC 24843) (Fission yeast).